A 129-amino-acid polypeptide reads, in one-letter code: Aldose 1-epimerase (129 aa).

This sequence belongs to the aldose epimerase family.

It carries out the reaction alpha-D-glucose = beta-D-glucose. It functions in the pathway carbohydrate metabolism; hexose metabolism. In terms of biological role, mutarotase converts alpha-aldose to the beta-anomer. It is active on D-glucose, L-arabinose, D-xylose, D-galactose, maltose and lactose. The sequence is that of Aldose 1-epimerase (galM) from Lactobacillus helveticus (Lactobacillus suntoryeus).